A 534-amino-acid polypeptide reads, in one-letter code: NAD(P)H-quinone oxidoreductase chain 4 (534 aa).

14 helical membrane-spanning segments follow: residues 6–26 (FPWLSTLIFFPIMATVALPFI), 38–58 (WYALVIGLIDFVLLIYAFYTQ), 91–111 (MPLILLTGFITSLAILASWPV), 117–137 (LFYFLILAMYGGQIAVFAVQD), 138–158 (LLVFFLVWELELVPVYLLLSI), 171–191 (FILYTAISSLFILVAALAMAF), 214–234 (LLCYTGFLVAFAVKLPIVPLH), 245–265 (TAPVHMLLAGILLKMGGYALI), 279–299 (FAPALIILGVVNIIYAALTSF), 316–336 (MGFVLIGIASFTDLGMSGAVL), 337–357 (QMVSHGLIGASLFFLVGATYD), 377–399 (IFAMFTTCSMASLALPGMSGFVA), 419–439 (VPVVILAGIGVILTPIYLLSM), and 466–486 (IFVIACLLVPIIGIGLYPKII).

This sequence belongs to the complex I subunit 4 family.

It localises to the cellular thylakoid membrane. It catalyses the reaction a plastoquinone + NADH + (n+1) H(+)(in) = a plastoquinol + NAD(+) + n H(+)(out). The catalysed reaction is a plastoquinone + NADPH + (n+1) H(+)(in) = a plastoquinol + NADP(+) + n H(+)(out). Functionally, NDH-1 shuttles electrons from NAD(P)H, via FMN and iron-sulfur (Fe-S) centers, to quinones in the respiratory chain. The immediate electron acceptor for the enzyme in this species is believed to be plastoquinone. Couples the redox reaction to proton translocation (for every two electrons transferred, four hydrogen ions are translocated across the cytoplasmic membrane), and thus conserves the redox energy in a proton gradient. This is NAD(P)H-quinone oxidoreductase chain 4 from Acaryochloris marina (strain MBIC 11017).